Here is a 789-residue protein sequence, read N- to C-terminus: 1-phosphatidylinositol 4,5-bisphosphate phosphodiesterase delta-3 (789 aa).

Positions Arg-63–Ala-172 constitute a PH domain. The interval Lys-73–Pro-101 is substrate binding. Position 105 is a phosphoserine (Ser-105). 3 EF-hand domains span residues Arg-182–Asp-217, Met-218–Arg-253, and Leu-250–Glu-285. Residues Asp-195, Asn-197, Asp-199, Lys-201, Glu-206, Asp-231, Ser-233, Asn-235, Arg-237, and Glu-242 each contribute to the Ca(2+) site. Residues Gln-337 to Lys-482 enclose the PI-PLC X-box domain. The active site involves His-352. Residues Asn-353, Glu-382, and Asp-384 each coordinate Ca(2+). The active site involves His-397. Glu-431 contributes to the Ca(2+) binding site. The interval Ser-461–Arg-519 is disordered. Substrate-binding residues include Lys-480 and Lys-482. Over residues Arg-488–Asp-497 the composition is skewed to basic and acidic residues. Ser-496 bears the Phosphoserine mark. Acidic residues predominate over residues Arg-498–Glu-513. Residues Leu-528–Arg-644 enclose the PI-PLC Y-box domain. Ser-557 is a substrate binding site. Ser-573 is subject to Phosphoserine. A substrate-binding site is contributed by Arg-584. In terms of domain architecture, C2 spans Arg-644–Ser-769. Ca(2+) contacts are provided by Ile-683, Asp-685, Asn-709, Asp-738, Tyr-739, and Asp-740.

Ca(2+) is required as a cofactor. Present in corneal epithelial cells (at protein level).

The protein localises to the membrane. The protein resides in the cytoplasm. It localises to the cleavage furrow. The catalysed reaction is a 1,2-diacyl-sn-glycero-3-phospho-(1D-myo-inositol-4,5-bisphosphate) + H2O = 1D-myo-inositol 1,4,5-trisphosphate + a 1,2-diacyl-sn-glycerol + H(+). With respect to regulation, strongly activated by phosphatidic acid. Inhibited by phosphatidylethanolamine (PtdEtn), phosphatidylcholine (PtdCho), sphingomyelin and phosphatidylserine (PtdSer). In terms of biological role, hydrolyzes the phosphatidylinositol 4,5-bisphosphate (PIP2) to generate 2 second messenger molecules diacylglycerol (DAG) and inositol 1,4,5-trisphosphate (IP3). DAG mediates the activation of protein kinase C (PKC), while IP3 releases Ca(2+) from intracellular stores. Essential for trophoblast and placental development. May participate in cytokinesis by hydrolyzing PIP2 at the cleavage furrow. Regulates neurite outgrowth through the inhibition of RhoA/Rho kinase signaling. This Homo sapiens (Human) protein is 1-phosphatidylinositol 4,5-bisphosphate phosphodiesterase delta-3.